The sequence spans 325 residues: NADH-cytochrome b5 reductase 2 (325 aa).

Residues 32-48 (VPLYGGLALAAGGAYYY) traverse the membrane as a helical segment. In terms of domain architecture, FAD-binding FR-type spans 74-179 (QGWVDLKLAG…KGPIPKYPWE (106 aa)). An FAD-binding site is contributed by 182-217 (KHDHICMIAGGTGITPMYQIIRKIFNNPNDKTKVTL).

Belongs to the flavoprotein pyridine nucleotide cytochrome reductase family. Requires FAD as cofactor.

The protein resides in the mitochondrion outer membrane. The catalysed reaction is 2 Fe(III)-[cytochrome b5] + NADH = 2 Fe(II)-[cytochrome b5] + NAD(+) + H(+). May mediate the reduction of outer membrane cytochrome b5. In Coccidioides immitis (strain RS) (Valley fever fungus), this protein is NADH-cytochrome b5 reductase 2 (MCR1).